The following is a 282-amino-acid chain: Bis(5'-nucleosyl)-tetraphosphatase, symmetrical (282 aa).

Belongs to the Ap4A hydrolase family.

The enzyme catalyses P(1),P(4)-bis(5'-adenosyl) tetraphosphate + H2O = 2 ADP + 2 H(+). Its function is as follows. Hydrolyzes diadenosine 5',5'''-P1,P4-tetraphosphate to yield ADP. This chain is Bis(5'-nucleosyl)-tetraphosphatase, symmetrical, found in Citrobacter koseri (strain ATCC BAA-895 / CDC 4225-83 / SGSC4696).